Consider the following 342-residue polypeptide: Mitogen-activated protein kinase kinase kinase 20 (342 aa).

The region spanning 3–268 (WVRGETIGFG…AEMLLNHSFV (266 aa)) is the Protein kinase domain. ATP is bound at residue 9-17 (IGFGTFSTV). Ser18 carries the post-translational modification Phosphoserine. Thr19 is modified (phosphothreonine). An ATP-binding site is contributed by Lys36. Phosphotyrosine occurs at positions 41 and 66. Phosphoserine occurs at positions 93 and 114. Asp131 acts as the Proton acceptor in catalysis. Residues 285 to 342 (KDEDKVLMSPKCPFEFDDWDSFTLDSNPSFDSPVERLGSLVSGSIPDWSVGGSWLTVR) form a required for MKK3 binding region.

It belongs to the protein kinase superfamily. Ser/Thr protein kinase family. In terms of assembly, interacts with MKK3 and MPK18 via its C-terminal domain. Binds to MKK5. In terms of processing, autophosphorylates; active in phosphorylated state. Dephosphorylated by ABI1. In terms of tissue distribution, expressed in roots, seedlings, leaves, flower buds, flowers and siliques.

Its subcellular location is the nucleus. It is found in the cytoplasm. It carries out the reaction L-seryl-[protein] + ATP = O-phospho-L-seryl-[protein] + ADP + H(+). The catalysed reaction is L-threonyl-[protein] + ATP = O-phospho-L-threonyl-[protein] + ADP + H(+). Its activity is regulated as follows. Activated through serine, threonine and tyrosine phosphorylation, especially upon abscisic acid (ABA) treatment. Restricted activity by ABI1-mediated dephosphorylation. Functionally, mitogen-activated protein kinase kinase (MAPKK) that phosphorylates both MKK3 and MPK18 and regulate two separate signaling pathways involved in root microtubule functions. MAPKK which regulates abscisic acid (ABA) responses in a MAPKKK20-MKK5-MPK6 cascade involved in root growth (e.g. root cell division and elongation) and stomatal response, probably via MKK5 activation by protein phosphorylation and subsequent activation of MAPK6 by MKK5. Involved in various abiotic stresses (e.g. osmotic stress, cold and hydrogen peroxide) responses by phosphorylating and thus regulating MPK6 activity, in an ABA-independent manner. The polypeptide is Mitogen-activated protein kinase kinase kinase 20 (Arabidopsis thaliana (Mouse-ear cress)).